Reading from the N-terminus, the 656-residue chain is Cyclic AMP-dependent transcription factor ATF-6 alpha (656 aa).

The tract at residues 1 to 137 (MESPFSPVLP…SPSSAEPLKE (137 aa)) is transcription activation. Lys75 is covalently cross-linked (Glycyl lysine isopeptide (Lys-Gly) (interchain with G-Cter in SUMO2)). 2 stretches are compositionally biased toward low complexity: residues 81–101 (LSPA…SCSS) and 111–121 (LLSSSQSPLSL). The disordered stretch occupies residues 81–171 (LSPASSSCSV…SKPSVQPKPL (91 aa)). A Glycyl lysine isopeptide (Lys-Gly) (interchain with G-Cter in ubiquitin) cross-link involves residue Lys139. The 64-residue stretch at 293–356 (VLRRQQRMIK…DQVVSENQRL (64 aa)) folds into the bZIP domain. Positions 295-326 (RRQQRMIKNRESACQSRKKKKEYMLGLEARLK) are basic motif. Residues 335 to 342 (LKKENGSL) form a leucine-zipper region. A helical; Signal-anchor for type II membrane protein transmembrane segment spans residues 378–398 (NYGPMSMLEQDSRRVKPSVSP). The Lumenal segment spans residues 399-656 (ANQRRHLLEF…VVSTLPESVQ (258 aa)). Positions 455–575 (QPLINTTESL…ATTHNKTTRP (121 aa)) are interaction with THBS4. N-linked (GlcNAc...) asparagine glycans are attached at residues Asn459, Asn570, and Asn629. Residues 632-656 (STFFGSPPTATETTHVVSTLPESVQ) form a disordered region.

This sequence belongs to the bZIP family. ATF subfamily. As to quaternary structure, interacts with XBP1 isoform 2; the interaction occurs in a ER stress-dependent manner. Interacts with LACC1. Interacts with THBS4 (via EGF-like 3; calcium-binding domain) which facilitates its processing, activation and nuclear translocation. Interacts (via lumenal domain) with THBS1. In terms of assembly, homodimer and heterodimer with ATF6-beta. The dimer interacts with the nuclear transcription factor Y (NF-Y) trimer through direct binding to NF-Y subunit C (NF-YC). Also interacts with the transcription factors GTF2I, YY1 and SRF. During unfolded protein response, a fragment of approximately 50 kDa containing the cytoplasmic transcription factor domain is released by proteolysis. The cleavage seems to be performed sequentially by site-1 (MBTPS1, S1P) and site-2 (MBTPS2, S2P) proteases. In terms of processing, N-glycosylated; in its luminal domain. The glycosylation status may serve as a sensor for ER homeostasis, resulting in ATF6 activation to trigger the unfolded protein response (UPR). Post-translationally, ubiquitinated by RNF186 at Lys-139, which is required for pattern recognition receptor-induced unfolded protein response-associated outcomes.

The protein resides in the endoplasmic reticulum membrane. The protein localises to the golgi apparatus membrane. It localises to the nucleus. Its function is as follows. Precursor of the transcription factor form (Processed cyclic AMP-dependent transcription factor ATF-6 alpha), which is embedded in the endoplasmic reticulum membrane. Endoplasmic reticulum stress promotes processing of this form, releasing the transcription factor form that translocates into the nucleus, where it activates transcription of genes involved in the unfolded protein response (UPR). Transcription factor that initiates the unfolded protein response (UPR) during endoplasmic reticulum stress by activating transcription of genes involved in the UPR. Binds DNA on the 5'-CCAC[GA]-3'half of the ER stress response element (ERSE) (5'-CCAAT-N(9)-CCAC[GA]-3') and of ERSE II (5'-ATTGG-N-CCACG-3'). Binding to ERSE requires binding of NF-Y to ERSE. Could also be involved in activation of transcription by the serum response factor. May play a role in foveal development and cone function in the retina. The protein is Cyclic AMP-dependent transcription factor ATF-6 alpha (Atf6) of Rattus norvegicus (Rat).